Here is a 460-residue protein sequence, read N- to C-terminus: MAEAVFRAPKRKRRVYESYESPLPIPFGQDQGPRKEFRIFQAEMISNNVVVRGTEDMEQLYGKGYFGKGILSRSRPNFTIANPTLAARWKGVQTDMPIITSEKYQHRVEWARDFLRRQGHDESTVQKILTDYTEPLELPCREEKEETPQHEPLSSKADSSLEGRVEKDELPVTPGGAGQSDDLPGLGTHSDCLQEGPGHATLAAASPSSHNGHVAEDPEVLPQETLVPQGGLWPEASSQAAGEKRAAHEYVLIEEELCGAQEEEAAAASDEKLLKRKKLVCRRNPYRIFEYLQLSLEEAFFLAYALGCLSIYYEKEPLTIVKLWQAFTAVQPTFRTTYMAYHYFRSKGWVPKVGLKYGTDLLLYRKGPPFYHASYSVIIELLDDNYEGSLRRPFSWKSLAALSRVSGNVSKELMLCYLIKPSTMTAEDMETPECMKRIQVQEVILSRWVSSRERSDQDEL.

The interval glutamate 143–alanine 215 is disordered. Over residues serine 159–leucine 170 the composition is skewed to basic and acidic residues. Active-site residues include tyrosine 364 and histidine 372. Phosphoserine occurs at positions 403, 406, and 410. Lysine 411 is an active-site residue.

The protein belongs to the tRNA-intron endonuclease family. As to quaternary structure, tRNA splicing endonuclease is a heterotetramer composed of TSEN2, TSEN15, TSEN34/LENG5 and TSEN54. tRNA splicing endonuclease complex also contains proteins of the pre-mRNA 3'-end processing machinery such as CLP1, CPSF1, CPSF4 and CSTF2.

The protein resides in the nucleus. It is found in the nucleolus. The catalysed reaction is pretRNA = a 3'-half-tRNA molecule with a 5'-OH end + a 5'-half-tRNA molecule with a 2',3'-cyclic phosphate end + an intron with a 2',3'-cyclic phosphate and a 5'-hydroxyl terminus.. Functionally, constitutes one of the two catalytic subunit of the tRNA-splicing endonuclease complex, a complex responsible for identification and cleavage of the splice sites in pre-tRNA. It cleaves pre-tRNA at the 5'- and 3'-splice sites to release the intron. The products are an intron and two tRNA half-molecules bearing 2',3'-cyclic phosphate and 5'-OH termini. There are no conserved sequences at the splice sites, but the intron is invariably located at the same site in the gene, placing the splice sites an invariant distance from the constant structural features of the tRNA body. Probably carries the active site for 5'-splice site cleavage. The tRNA splicing endonuclease is also involved in mRNA processing via its association with pre-mRNA 3'-end processing factors, establishing a link between pre-tRNA splicing and pre-mRNA 3'-end formation, suggesting that the endonuclease subunits function in multiple RNA-processing events. This chain is tRNA-splicing endonuclease subunit Sen2 (Tsen2), found in Mus musculus (Mouse).